The following is a 209-amino-acid chain: Protease (209 aa).

Active-site residues include H55, D72, and C123.

This sequence belongs to the peptidase C5 family. In terms of assembly, interacts with protease cofactor pVI-C; this interaction is necessary for protease activation.

It is found in the virion. It localises to the host nucleus. The catalysed reaction is Cleaves proteins of the adenovirus and its host cell at two consensus sites: -Yaa-Xaa-Gly-Gly-|-Xaa- and -Yaa-Xaa-Gly-Xaa-|-Gly- (in which Yaa is Met, Ile or Leu, and Xaa is any amino acid).. With respect to regulation, requires DNA and protease cofactor for maximal activation. Inside nascent virions, becomes partially activated by binding to the viral DNA, allowing it to cleave the cofactor that binds to the protease and fully activates it. Actin, like the viral protease cofactor, seems to act as a cofactor in the cleavage of cytokeratin 18 and of actin itself. Cleaves viral precursor proteins (pTP, pIIIa, pVI, pVII, pVIII, and pX) inside newly assembled particles giving rise to mature virions. Protease complexed to its cofactor slides along the viral DNA to specifically locate and cleave the viral precursors. Mature virions have a weakened organization compared to the unmature virions, thereby facilitating subsequent uncoating. Without maturation, the particle lacks infectivity and is unable to uncoat. Late in adenovirus infection, in the cytoplasm, may participate in the cytoskeleton destruction. Cleaves host cell cytoskeletal keratins K7 and K18. In Human adenovirus D serotype 9 (HAdV-9), this protein is Protease.